Consider the following 128-residue polypeptide: Infection structure-specific protein 56 (128 aa).

Polar residues-rich tracts occupy residues 27-36 (HATYPQSQPH) and 87-101 (TSIS…DSQS). Disordered stretches follow at residues 27-48 (HATY…AVPS) and 86-128 (GTSI…STSA). Positions 115-128 (KDAKKELKDPSTSA) are enriched in basic and acidic residues.

Its function is as follows. General role in the development of germlings including formation of the infection structures. In Uromyces appendiculatus (Rust fungus), this protein is Infection structure-specific protein 56 (INF56).